A 121-amino-acid chain; its full sequence is Small ribosomal subunit protein uS13 (121 aa).

The tract at residues 95–121 (LPMRGQRTRTNARTRKGPRKAAASLKK) is disordered.

It belongs to the universal ribosomal protein uS13 family. Part of the 30S ribosomal subunit. Forms a loose heterodimer with protein S19. Forms two bridges to the 50S subunit in the 70S ribosome.

In terms of biological role, located at the top of the head of the 30S subunit, it contacts several helices of the 16S rRNA. In the 70S ribosome it contacts the 23S rRNA (bridge B1a) and protein L5 of the 50S subunit (bridge B1b), connecting the 2 subunits; these bridges are implicated in subunit movement. Contacts the tRNAs in the A and P-sites. The polypeptide is Small ribosomal subunit protein uS13 (Polaromonas naphthalenivorans (strain CJ2)).